A 275-amino-acid polypeptide reads, in one-letter code: Gibberellin-regulated protein 14 (275 aa).

An N-terminal signal peptide occupies residues 1–21 (MALSLLSVFIFFHVFTNVVFA). Residues 34–207 (PTPTLPSPSP…TAPPVKPPTP (174 aa)) form a disordered region. The segment covering 36-207 (PTLPSPSPAT…TAPPVKPPTP (172 aa)) has biased composition (pro residues).

This sequence belongs to the GASA family. Six disulfide bonds may be present. As to expression, expressed in flower abscission zone, style, stamen filaments and lateral roots.

The protein localises to the secreted. Functionally, gibberellin-regulated protein that may function in hormonal controlled steps of development such as seed germination, flowering and seed maturation. This chain is Gibberellin-regulated protein 14 (GASA14), found in Arabidopsis thaliana (Mouse-ear cress).